Reading from the N-terminus, the 148-residue chain is Augurin (148 aa).

Positions 1 to 31 are cleaved as a signal peptide; that stretch reads MGTSSARPAVLALAGLALLLLLCLGPGDVSG. 2 propeptides span residues 32–68 and 133–148; these read NKLKKMLQKREGPVPSKTNVAVSEHTAKEFLGGLKRA and SREGFRHGASVNYDDY.

The protein belongs to the augurin family. In terms of tissue distribution, expressed in the brain, with expression in the choroid plexus and the ventricular ependymal cells (at protein level).

The protein resides in the secreted. It is found in the cytoplasm. Its subcellular location is the apical cell membrane. Its function is as follows. Probable hormone that may attenuate cell proliferation and induce senescence of oligodendrocyte and neural precursor cells in the central nervous system. ECRG4-induced senescence is characterized by G1 arrest, RB1 dephosphorylation and accelerated CCND1 and CCND3 proteasomal degradation. The sequence is that of Augurin from Rattus norvegicus (Rat).